A 177-amino-acid chain; its full sequence is Large ribosomal subunit protein uL6 (177 aa).

It belongs to the universal ribosomal protein uL6 family. In terms of assembly, part of the 50S ribosomal subunit.

Its function is as follows. This protein binds to the 23S rRNA, and is important in its secondary structure. It is located near the subunit interface in the base of the L7/L12 stalk, and near the tRNA binding site of the peptidyltransferase center. The polypeptide is Large ribosomal subunit protein uL6 (Rubrobacter xylanophilus (strain DSM 9941 / JCM 11954 / NBRC 16129 / PRD-1)).